The chain runs to 59 residues: Cecropin-C type 2 (59 aa).

An N-terminal signal peptide occupies residues 1–23 (MNFAKVFVLVAMAVLLLVGQSEA).

It belongs to the cecropin family.

It localises to the secreted. Functionally, cecropins have lytic and antibacterial activity against several Gram-positive and Gram-negative bacteria. The chain is Cecropin-C type 2 (CECC2) from Aedes albopictus (Asian tiger mosquito).